The following is a 54-amino-acid chain: uncharacterized protein (54 aa).

The protein to B.subtilis XkdX.

This is an uncharacterized protein from Bacillus subtilis (strain 168).